A 433-amino-acid chain; its full sequence is 23S rRNA (uracil(1939)-C(5))-methyltransferase RlmD (433 aa).

Residues M1–R53 enclose the TRAM domain. [4Fe-4S] cluster-binding residues include C66, C72, C75, and C154. S-adenosyl-L-methionine is bound by residues Q263, F292, N297, E313, N341, and D362. The Nucleophile role is filled by C389.

This sequence belongs to the class I-like SAM-binding methyltransferase superfamily. RNA M5U methyltransferase family. RlmD subfamily.

The catalysed reaction is uridine(1939) in 23S rRNA + S-adenosyl-L-methionine = 5-methyluridine(1939) in 23S rRNA + S-adenosyl-L-homocysteine + H(+). In terms of biological role, catalyzes the formation of 5-methyl-uridine at position 1939 (m5U1939) in 23S rRNA. The chain is 23S rRNA (uracil(1939)-C(5))-methyltransferase RlmD from Azoarcus sp. (strain BH72).